The primary structure comprises 810 residues: Myoneurin (810 aa).

One can recognise a BTB domain in the interval 24–91 (CDCTVSIGQA…IYTGDLNMDR (68 aa)). Disordered regions lie at residues 122–146 (NVGS…DYEP) and 169–466 (VSMD…VKPV). Positions 173–183 (EAQSSSEQTPQ) are enriched in polar residues. Composition is skewed to basic residues over residues 185–194 (VGKRGRKPKT) and 211–225 (GRGR…RPRV). Over residues 229 to 238 (SSDSTDQSPA) the composition is skewed to polar residues. Residues 243–253 (SPNGSSTSRGS) are compositionally biased toward low complexity. The segment at residues 254 to 266 (GRPRGRPRVRPLS) is a DNA-binding region (a.T hook 1). Over residues 270 to 308 (EDPRNVEDDPAANKDQEVEKGNEEQKKETGEKDDGKNDT) the composition is skewed to basic and acidic residues. Positions 318–330 (KRGRGRPRIKPVS) form a DNA-binding region, a.T hook 2. Residues 331–346 (TEDQTTNSENVTTNAE) show a composition bias toward polar residues. Residues 350–361 (EPAKTKDSEGTG) are compositionally biased toward basic and acidic residues. Positions 361–373 (GRKRGRPRSKPVS) form a DNA-binding region, a.T hook 3. The segment covering 386–396 (SGEEAGEETSQ) has biased composition (acidic residues). Residues 419 to 428 (ISKRKRILSR) show a composition bias toward basic residues. Positions 428 to 432 (RKLKE) match the Nuclear localization signal motif. Over residues 435–460 (AGDEEEEEEEEMDDEFENDNEDWAGE) the composition is skewed to acidic residues. 7 C2H2-type zinc fingers span residues 472–494 (PICN…MRIH), 500–522 (YQCT…MRIH), 528–551 (FTCT…RMHH), 557–579 (YKCE…IRKH), 585–607 (YECG…KRRH), 613–635 (YICD…NRKH), and 641–663 (YICL…MDVH).

Belongs to the krueppel C2H2-type zinc-finger protein family.

It localises to the nucleus. The sequence is that of Myoneurin (mynn) from Danio rerio (Zebrafish).